Consider the following 58-residue polypeptide: TRGMLAYVEKIQREERKHGVDTLAHQKWSGANYYDRVLRTVQGGMTSTAAMGKGVTEE.

Belongs to the isocitrate lyase/PEP mutase superfamily. Isocitrate lyase family. In terms of assembly, homotetramer. Mg(2+) is required as a cofactor.

It is found in the glyoxysome. The enzyme catalyses D-threo-isocitrate = glyoxylate + succinate. It functions in the pathway carbohydrate metabolism; glyoxylate cycle; (S)-malate from isocitrate: step 1/2. Its function is as follows. Involved in storage lipid mobilization during the growth of higher plant seedling. This Helianthus annuus (Common sunflower) protein is Isocitrate lyase.